Reading from the N-terminus, the 248-residue chain is Tyrosine recombinase XerD-like (248 aa).

The Core-binding (CB) domain occupies 1–72 (MKSYIEPFIA…TANQFLYYLY (72 aa)). The Tyr recombinase domain occupies 85–248 (DTMKVMRTEK…PVTLEKYYKS (164 aa)). Catalysis depends on residues Lys149 and Arg213. Tyr245 serves as the catalytic O-(3'-phospho-DNA)-tyrosine intermediate.

The protein belongs to the 'phage' integrase family. XerD-like subfamily.

It localises to the cytoplasm. In terms of biological role, putative tyrosine recombinase. Not involved in the cutting and rejoining of the recombining DNA molecules on dif(SL) site. In Streptococcus pyogenes serotype M3 (strain ATCC BAA-595 / MGAS315), this protein is Tyrosine recombinase XerD-like.